A 72-amino-acid chain; its full sequence is Omega-conotoxin-like SVIA mutant 1 (72 aa).

A signal peptide spans 1–22; the sequence is MKLTCVVIVAVLLLTACQLITA. The propeptide occupies 23–48; that stretch reads EDSRGAQKHRTLRSTARRSKSELTTR. 3 disulfide bridges follow: Cys49/Cys63, Cys56/Cys66, and Cys62/Cys71. Pro55 carries the post-translational modification 4-hydroxyproline.

The protein belongs to the conotoxin O1 superfamily. In terms of tissue distribution, expressed by the venom duct.

The protein resides in the secreted. Omega-conotoxins act at presynaptic membranes, they bind and block voltage-gated calcium channels (Cav). The chain is Omega-conotoxin-like SVIA mutant 1 from Conus striatus (Striated cone).